Reading from the N-terminus, the 329-residue chain is Ephrin-B1 (329 aa).

Positions 1-20 (MEGLRRLLGLLLVLYRLCSA) are cleaved as a signal peptide. Residues 21 to 226 (LGKNLEPVTW…FFNSKIAVFA (206 aa)) are Extracellular-facing. In terms of domain architecture, Ephrin RBD spans 23 to 157 (KNLEPVTWNS…TRSMKIIMKV (135 aa)). Cystine bridges form between cysteine 57/cysteine 94 and cysteine 82/cysteine 146. N-linked (GlcNAc...) asparagine glycosylation occurs at asparagine 132. The segment at 163-192 (AVPPEQLTTTRPSKEADNTGKIATFGPWNG) is disordered. Residue asparagine 203 is glycosylated (N-linked (GlcNAc...) asparagine). The helical transmembrane segment at 227-247 (AIGAGCVIFILIIIFLVVLLI) threads the bilayer. Topologically, residues 248–329 (KIRKRHRKHT…QSPANIYYKV (82 aa)) are cytoplasmic. The short motif at 327 to 329 (YKV) is the PDZ-binding element.

The protein belongs to the ephrin family. Interacts with TLE4 through the PDZ-binding motif. Post-translationally, inducible phosphorylation of tyrosine residues in the cytoplasmic domain. Tyrosine phosphorylation inhibits TLE4-binding. In terms of tissue distribution, expressed at low levels in most tissues with highest levels in the kidney, oocytes, ovary and testis.

It localises to the membrane. Its function is as follows. Cell surface transmembrane ligand for Eph receptors, a family of receptor tyrosine kinases which are crucial for migration, repulsion and adhesion during neuronal, vascular and epithelial development. Binds promiscuously Eph receptors residing on adjacent cells, leading to contact-dependent bidirectional signaling into neighboring cells. The signaling pathway downstream of the receptor is referred to as forward signaling while the signaling pathway downstream of the ephrin ligand is referred to as reverse signaling. May have a role in the developing mesenchymal and nervous tissue. This chain is Ephrin-B1 (efnb1), found in Xenopus laevis (African clawed frog).